The following is a 376-amino-acid chain: Quinolinate synthase (376 aa).

Residues H57 and S78 each contribute to the iminosuccinate site. C123 is a binding site for [4Fe-4S] cluster. Residues 149-151 (YAN) and S166 contribute to the iminosuccinate site. Residue C210 coordinates [4Fe-4S] cluster. Residues 236-238 (HPE) and T253 each bind iminosuccinate. C307 contributes to the [4Fe-4S] cluster binding site.

It belongs to the quinolinate synthase family. Type 1 subfamily. It depends on [4Fe-4S] cluster as a cofactor.

The protein localises to the cytoplasm. It catalyses the reaction iminosuccinate + dihydroxyacetone phosphate = quinolinate + phosphate + 2 H2O + H(+). It functions in the pathway cofactor biosynthesis; NAD(+) biosynthesis; quinolinate from iminoaspartate: step 1/1. Catalyzes the condensation of iminoaspartate with dihydroxyacetone phosphate to form quinolinate. The sequence is that of Quinolinate synthase from Paraburkholderia phymatum (strain DSM 17167 / CIP 108236 / LMG 21445 / STM815) (Burkholderia phymatum).